The primary structure comprises 228 residues: Small ribosomal subunit protein uS3 (228 aa).

The 69-residue stretch at valine 39–arginine 107 folds into the KH type-2 domain.

This sequence belongs to the universal ribosomal protein uS3 family. Part of the 30S ribosomal subunit. Forms a tight complex with proteins S10 and S14.

In terms of biological role, binds the lower part of the 30S subunit head. Binds mRNA in the 70S ribosome, positioning it for translation. This chain is Small ribosomal subunit protein uS3, found in Pseudomonas aeruginosa (strain UCBPP-PA14).